A 262-amino-acid chain; its full sequence is 5'-nucleotidase SurE (262 aa).

D8, D9, S39, and N91 together coordinate a divalent metal cation.

The protein belongs to the SurE nucleotidase family. The cofactor is a divalent metal cation.

It is found in the cytoplasm. It catalyses the reaction a ribonucleoside 5'-phosphate + H2O = a ribonucleoside + phosphate. Its function is as follows. Nucleotidase that shows phosphatase activity on nucleoside 5'-monophosphates. The protein is 5'-nucleotidase SurE of Geobacter sulfurreducens (strain ATCC 51573 / DSM 12127 / PCA).